We begin with the raw amino-acid sequence, 154 residues long: Transcriptional repressor NrdR (154 aa).

The segment at 3–34 (CPFCSAHDTKVIDSRLVAEGDQVRRRRECQAC) is a zinc-finger region. An ATP-cone domain is found at 49 to 139 (PRVIKQDGSR…VYRRFQDLNE (91 aa)).

The protein belongs to the NrdR family. Zn(2+) is required as a cofactor.

Its function is as follows. Negatively regulates transcription of bacterial ribonucleotide reductase nrd genes and operons by binding to NrdR-boxes. The sequence is that of Transcriptional repressor NrdR from Azotobacter vinelandii (strain DJ / ATCC BAA-1303).